The sequence spans 193 residues: Orotate phosphoribosyltransferase (193 aa).

5-phospho-alpha-D-ribose 1-diphosphate is bound at residue glutamate 114–serine 122. Residues threonine 118 and arginine 146 each contribute to the orotate site.

Belongs to the purine/pyrimidine phosphoribosyltransferase family. PyrE subfamily. In terms of assembly, homodimer. Mg(2+) is required as a cofactor.

It catalyses the reaction orotidine 5'-phosphate + diphosphate = orotate + 5-phospho-alpha-D-ribose 1-diphosphate. The protein operates within pyrimidine metabolism; UMP biosynthesis via de novo pathway; UMP from orotate: step 1/2. Functionally, catalyzes the transfer of a ribosyl phosphate group from 5-phosphoribose 1-diphosphate to orotate, leading to the formation of orotidine monophosphate (OMP). This is Orotate phosphoribosyltransferase from Chlorobium phaeobacteroides (strain BS1).